Reading from the N-terminus, the 159-residue chain is Protein-export protein SecB (159 aa).

Belongs to the SecB family. As to quaternary structure, homotetramer, a dimer of dimers. One homotetramer interacts with 1 SecA dimer.

The protein localises to the cytoplasm. One of the proteins required for the normal export of preproteins out of the cell cytoplasm. It is a molecular chaperone that binds to a subset of precursor proteins, maintaining them in a translocation-competent state. It also specifically binds to its receptor SecA. This Pseudomonas fluorescens (strain ATCC BAA-477 / NRRL B-23932 / Pf-5) protein is Protein-export protein SecB.